The sequence spans 249 residues: 5'-nucleotidase SurE (249 aa).

A divalent metal cation is bound by residues Asp8, Asp9, Ser39, and Asn91.

Belongs to the SurE nucleotidase family. A divalent metal cation is required as a cofactor.

Its subcellular location is the cytoplasm. It catalyses the reaction a ribonucleoside 5'-phosphate + H2O = a ribonucleoside + phosphate. Functionally, nucleotidase that shows phosphatase activity on nucleoside 5'-monophosphates. In Magnetococcus marinus (strain ATCC BAA-1437 / JCM 17883 / MC-1), this protein is 5'-nucleotidase SurE.